Consider the following 150-residue polypeptide: Transcriptional repressor NrdR (150 aa).

Residues 3 to 34 fold into a zinc finger; that stretch reads CPFCAFADSKVVDSRPDKEGSTIRRRRECESC. The ATP-cone domain maps to 49 to 139; that stretch reads PLVIKKDGRR…VYRSFKDITE (91 aa).

It belongs to the NrdR family. Zn(2+) is required as a cofactor.

Its function is as follows. Negatively regulates transcription of bacterial ribonucleotide reductase nrd genes and operons by binding to NrdR-boxes. This Geotalea daltonii (strain DSM 22248 / JCM 15807 / FRC-32) (Geobacter daltonii) protein is Transcriptional repressor NrdR.